A 729-amino-acid polypeptide reads, in one-letter code: Phosphoribosylformylglycinamidine synthase subunit PurL (729 aa).

His-54 is a catalytic residue. ATP is bound by residues Tyr-57 and Lys-96. Glu-98 lines the Mg(2+) pocket. Substrate-binding positions include Ser-99–His-102 and Arg-121. His-100 acts as the Proton acceptor in catalysis. Asp-122 provides a ligand contact to Mg(2+). A substrate-binding site is contributed by Gln-245. Asp-273 lines the Mg(2+) pocket. Residue Glu-317–Gln-319 coordinates substrate. Asp-495 and Gly-532 together coordinate ATP. Asn-533 is a Mg(2+) binding site. Residue Ser-535 participates in substrate binding.

This sequence belongs to the FGAMS family. Monomer. Part of the FGAM synthase complex composed of 1 PurL, 1 PurQ and 2 PurS subunits.

The protein localises to the cytoplasm. The enzyme catalyses N(2)-formyl-N(1)-(5-phospho-beta-D-ribosyl)glycinamide + L-glutamine + ATP + H2O = 2-formamido-N(1)-(5-O-phospho-beta-D-ribosyl)acetamidine + L-glutamate + ADP + phosphate + H(+). Its pathway is purine metabolism; IMP biosynthesis via de novo pathway; 5-amino-1-(5-phospho-D-ribosyl)imidazole from N(2)-formyl-N(1)-(5-phospho-D-ribosyl)glycinamide: step 1/2. Part of the phosphoribosylformylglycinamidine synthase complex involved in the purines biosynthetic pathway. Catalyzes the ATP-dependent conversion of formylglycinamide ribonucleotide (FGAR) and glutamine to yield formylglycinamidine ribonucleotide (FGAM) and glutamate. The FGAM synthase complex is composed of three subunits. PurQ produces an ammonia molecule by converting glutamine to glutamate. PurL transfers the ammonia molecule to FGAR to form FGAM in an ATP-dependent manner. PurS interacts with PurQ and PurL and is thought to assist in the transfer of the ammonia molecule from PurQ to PurL. The protein is Phosphoribosylformylglycinamidine synthase subunit PurL of Staphylococcus saprophyticus subsp. saprophyticus (strain ATCC 15305 / DSM 20229 / NCIMB 8711 / NCTC 7292 / S-41).